The following is a 180-amino-acid chain: Large ribosomal subunit protein uL5 (180 aa).

Belongs to the universal ribosomal protein uL5 family. In terms of assembly, part of the 50S ribosomal subunit; part of the 5S rRNA/L5/L18/L25 subcomplex. Contacts the 5S rRNA and the P site tRNA. Forms a bridge to the 30S subunit in the 70S ribosome.

Its function is as follows. This is one of the proteins that bind and probably mediate the attachment of the 5S RNA into the large ribosomal subunit, where it forms part of the central protuberance. In the 70S ribosome it contacts protein S13 of the 30S subunit (bridge B1b), connecting the 2 subunits; this bridge is implicated in subunit movement. Contacts the P site tRNA; the 5S rRNA and some of its associated proteins might help stabilize positioning of ribosome-bound tRNAs. In Xanthomonas euvesicatoria pv. vesicatoria (strain 85-10) (Xanthomonas campestris pv. vesicatoria), this protein is Large ribosomal subunit protein uL5.